The primary structure comprises 321 residues: ATP phosphoribosyltransferase regulatory subunit (321 aa).

The protein belongs to the class-II aminoacyl-tRNA synthetase family. HisZ subfamily. In terms of assembly, heteromultimer composed of HisG and HisZ subunits.

Its subcellular location is the cytoplasm. It participates in amino-acid biosynthesis; L-histidine biosynthesis; L-histidine from 5-phospho-alpha-D-ribose 1-diphosphate: step 1/9. Required for the first step of histidine biosynthesis. May allow the feedback regulation of ATP phosphoribosyltransferase activity by histidine. This is ATP phosphoribosyltransferase regulatory subunit from Thiobacillus denitrificans (strain ATCC 25259 / T1).